A 320-amino-acid polypeptide reads, in one-letter code: Ferrochelatase (320 aa).

Residues His194 and Glu275 each coordinate Fe cation.

Belongs to the ferrochelatase family.

The protein resides in the cytoplasm. The catalysed reaction is heme b + 2 H(+) = protoporphyrin IX + Fe(2+). It participates in porphyrin-containing compound metabolism; protoheme biosynthesis; protoheme from protoporphyrin-IX: step 1/1. Functionally, catalyzes the ferrous insertion into protoporphyrin IX. This Serratia proteamaculans (strain 568) protein is Ferrochelatase.